We begin with the raw amino-acid sequence, 194 residues long: CASP-like protein 4D1 (194 aa).

The Cytoplasmic segment spans residues 1–10 (MASRTVLLPS). A helical transmembrane segment spans residues 11–31 (AVLILRLLSLGLLAASLALIA). Residues 32–55 (ADKLNVDSDPPQRYTFRDVYAYRY) are Extracellular-facing. The chain crosses the membrane as a helical span at residues 56 to 76 (VLAVAVIGCAYTLLQLPLAAV). Over 77 to 94 (SIIASGNNKRGIGAGGGS) the chain is Cytoplasmic. Residues 95 to 115 (VAVALLVLVLLADVVFALLLA) traverse the membrane as a helical segment. The Extracellular segment spans residues 116-161 (TGAAAGFAFTYDVKRYLDGQFDDDSIGTPEVDKLHRDMDKFFDLAY). A helical transmembrane segment spans residues 162–182 (AAAGLMLAAAACMALVIMLSV). At 183–194 (YSLARQVRSDYI) the chain is on the cytoplasmic side.

Belongs to the Casparian strip membrane proteins (CASP) family. In terms of assembly, homodimer and heterodimers.

Its subcellular location is the cell membrane. This Sorghum bicolor (Sorghum) protein is CASP-like protein 4D1.